Reading from the N-terminus, the 829-residue chain is RNA-directed RNA polymerase (829 aa).

A disordered region spans residues 1–39; that stretch reads MKEPVDCRLSTPAGFSGTVPPPGRTKAARPGTIPVRRSR.

Forms a ribonucleoprotein complex with the 20S RNA, where a single polymerase molecule binds to a single viral RNA genome. Since the viral RNA is not encapsidated, ribonucleoprotein complex formation appears to be the strategy to survive in the host as persistent virus.

The protein resides in the host cytoplasm. It catalyses the reaction RNA(n) + a ribonucleoside 5'-triphosphate = RNA(n+1) + diphosphate. Its function is as follows. RNA-directed RNA polymerase that replicates the viral (+) and (-) genome. This is RNA-directed RNA polymerase from Saccharomyces cerevisiae (Baker's yeast).